Consider the following 252-residue polypeptide: ATP synthase subunit a (252 aa).

6 helical membrane passes run 29 to 49, 87 to 107, 117 to 137, 146 to 166, 188 to 208, and 211 to 231; these read FTNS…FLFL, FFPL…LGLF, IIVT…YGFM, LFVP…IEVI, ITLK…AVGV, and SILP…VAFL.

This sequence belongs to the ATPase A chain family. As to quaternary structure, F-type ATPases have 2 components, CF(1) - the catalytic core - and CF(0) - the membrane proton channel. CF(1) has five subunits: alpha(3), beta(3), gamma(1), delta(1), epsilon(1). CF(0) has three main subunits: a(1), b(2) and c(9-12). The alpha and beta chains form an alternating ring which encloses part of the gamma chain. CF(1) is attached to CF(0) by a central stalk formed by the gamma and epsilon chains, while a peripheral stalk is formed by the delta and b chains.

The protein localises to the cell inner membrane. Key component of the proton channel; it plays a direct role in the translocation of protons across the membrane. This Mesorhizobium japonicum (strain LMG 29417 / CECT 9101 / MAFF 303099) (Mesorhizobium loti (strain MAFF 303099)) protein is ATP synthase subunit a.